Reading from the N-terminus, the 67-residue chain is UPF0434 protein Patl_1782 (67 aa).

The protein belongs to the UPF0434 family.

This chain is UPF0434 protein Patl_1782, found in Pseudoalteromonas atlantica (strain T6c / ATCC BAA-1087).